The chain runs to 464 residues: Trigger factor (464 aa).

Residues 162–243 (GDFISIDLSA…VGTVKERELP (82 aa)) enclose the PPIase FKBP-type domain. Residues 435–464 (ELFGNGEAETEEAASTDEAASDSTESEDQK) form a disordered region.

This sequence belongs to the FKBP-type PPIase family. Tig subfamily.

The protein localises to the cytoplasm. It carries out the reaction [protein]-peptidylproline (omega=180) = [protein]-peptidylproline (omega=0). In terms of biological role, involved in protein export. Acts as a chaperone by maintaining the newly synthesized protein in an open conformation. Functions as a peptidyl-prolyl cis-trans isomerase. The sequence is that of Trigger factor from Rhodococcus jostii (strain RHA1).